Reading from the N-terminus, the 312-residue chain is Malate dehydrogenase 1 (312 aa).

Residues 11–16 (GAGQIG) and D35 contribute to the NAD(+) site. Substrate contacts are provided by R86 and R92. Residues N99 and 122-124 (ITN) contribute to the NAD(+) site. The substrate site is built by N124 and R155. The Proton acceptor role is filled by H179.

The protein belongs to the LDH/MDH superfamily. MDH type 3 family.

The enzyme catalyses (S)-malate + NAD(+) = oxaloacetate + NADH + H(+). Its function is as follows. Catalyzes the reversible oxidation of malate to oxaloacetate. This Anaeromyxobacter dehalogenans (strain 2CP-C) protein is Malate dehydrogenase 1.